The chain runs to 430 residues: Mannosylglucosylglycerate synthase (430 aa).

It belongs to the glycosyltransferase group 1 family. A divalent metal cation serves as cofactor.

It carries out the reaction (2R)-2-O-(alpha-D-glucopyranosyl)-glycerate + GDP-alpha-D-mannose = (2R)-2-O-[alpha-D-mannopyranosyl-(1-&gt;2)-alpha-D-glucopyranosyl]-glycerate + GDP + H(+). Its function is as follows. Involved in the biosynthesis of the compatible solute mannosylglucosylglycerate through a nonphosphorylating pathway. Catalyzes the synthesis of mannosylglucosylglycerate (MGG) from glucosylglycerate (GG) and GDP-mannose. This Petrotoga mobilis (strain DSM 10674 / SJ95) protein is Mannosylglucosylglycerate synthase.